The sequence spans 536 residues: MRALLIYPLFPPTFWSYEKILELVGRKVLLPPLGLITVAGILPQEWEFKLVDRNVRNVTEAEWDWAEVVIISGMIVQRDDMVENIKEAKAHGKLVAVGGPFATSVPDEVQNAGADFLILDEGEITLPLFVEALERGETAGIIRAQEKPDVTTTPIPRYDLLELDAYDSMSVQFSRGCPFQCEFCDIIVLYGRKPRTKEPAQLLRELDYLYELGWRRSVFMVDDNFIGNKRNVKLLLKELKVWQEEHQYPFRFNTEASVDLADDQELMDLMVECYFDAVFLGIETPDEESLEFTKKFQNTRNSLADSVDKIIKAGLRPMAGFIIGFDGEKQGAGDRIVRFAEQTAIPTTTFAMLQALPNTALWHRLKRENRLLDESKGNINQTTLMNFIPTRPLEDIANEYVEAFWELYDPHGYLDRNYRCFLKLGAPKCKTAFKLPNLVDLKALAIVIWRQGVKRDTRFRFWHHAFGILRHNPAVFEHYITLCAHNEHFLQYREIVRQEIGEQLRDYLSRQQQDKVEETVLSPTAIAAETEKVLAS.

The 232-residue stretch at 163 to 394 folds into the Radical SAM core domain; it reads LDAYDSMSVQ…MNFIPTRPLE (232 aa). [4Fe-4S] cluster-binding residues include Cys177, Cys181, and Cys184.

Requires [4Fe-4S] cluster as cofactor.

This is an uncharacterized protein from Synechocystis sp. (strain ATCC 27184 / PCC 6803 / Kazusa).